The following is a 202-amino-acid chain: GPI-anchored hemophore cfmB (202 aa).

The N-terminal stretch at Met-1–Ala-18 is a signal peptide. Residues Gln-19–Thr-108 form the CFEM domain. Disulfide bonds link Cys-26/Cys-67, Cys-30/Cys-62, Cys-40/Cys-48, and Cys-50/Cys-83. Asp-45 is a binding site for heme. The tract at residues Pro-94 to Ala-171 is disordered. Low complexity predominate over residues Ala-97–Ala-171. The GPI-anchor amidated asparagine moiety is linked to residue Asn-180. A propeptide spans Ala-181–Leu-202 (removed in mature form).

Belongs to the RBT5 family. Post-translationally, the GPI-anchor is attached to the protein in the endoplasmic reticulum and serves to target the protein to the cell surface. There, the glucosamine-inositol phospholipid moiety is cleaved off and the GPI-modified mannoprotein is covalently attached via its lipidless GPI glycan remnant to the 1,6-beta-glucan of the outer cell wall layer.

Its subcellular location is the secreted. It is found in the cell wall. The protein localises to the cell membrane. Functionally, GPI-anchored cell wall protein involved in stabilizing the cell wall. Not implicated in virulence, heme uptake and biofilm formation. In Aspergillus fumigatus (strain ATCC MYA-4609 / CBS 101355 / FGSC A1100 / Af293) (Neosartorya fumigata), this protein is GPI-anchored hemophore cfmB.